The primary structure comprises 75 residues: Protein SlyX homolog (75 aa).

The protein belongs to the SlyX family.

In Vibrio vulnificus (strain CMCP6), this protein is Protein SlyX homolog.